A 333-amino-acid chain; its full sequence is 5-formaminoimidazole-4-carboxamide-1-(beta)-D-ribofuranosyl 5'-monophosphate synthetase (333 aa).

Positions 9 and 73 each coordinate 5-amino-1-(5-phospho-beta-D-ribosyl)imidazole-4-carboxamide. One can recognise an ATP-grasp domain in the interval 94-324 (RNLFEWEANQ…ISREIKLAIN (231 aa)). ATP-binding positions include 124–184 (PEDI…VPMY) and Glu-206. Asn-230 lines the 5-amino-1-(5-phospho-beta-D-ribosyl)imidazole-4-carboxamide pocket. Positions 269 and 282 each coordinate Mg(2+).

The protein belongs to the phosphohexose mutase family. It depends on Mg(2+) as a cofactor. The cofactor is Mn(2+).

The enzyme catalyses 5-amino-1-(5-phospho-beta-D-ribosyl)imidazole-4-carboxamide + formate + ATP = 5-formamido-1-(5-phospho-D-ribosyl)imidazole-4-carboxamide + ADP + phosphate. The protein operates within purine metabolism; IMP biosynthesis via de novo pathway; 5-formamido-1-(5-phospho-D-ribosyl)imidazole-4-carboxamide from 5-amino-1-(5-phospho-D-ribosyl)imidazole-4-carboxamide (formate route): step 1/1. Catalyzes the ATP- and formate-dependent formylation of 5-aminoimidazole-4-carboxamide-1-beta-d-ribofuranosyl 5'-monophosphate (AICAR) to 5-formaminoimidazole-4-carboxamide-1-beta-d-ribofuranosyl 5'-monophosphate (FAICAR) in the absence of folates. The chain is 5-formaminoimidazole-4-carboxamide-1-(beta)-D-ribofuranosyl 5'-monophosphate synthetase from Sulfurisphaera tokodaii (strain DSM 16993 / JCM 10545 / NBRC 100140 / 7) (Sulfolobus tokodaii).